We begin with the raw amino-acid sequence, 981 residues long: Mediator of RNA polymerase II transcription subunit 5 (981 aa).

Belongs to the Mediator complex subunit 5 family. Component of the Mediator complex.

The protein localises to the nucleus. Component of the Mediator complex, a coactivator involved in the regulated transcription of nearly all RNA polymerase II-dependent genes. Mediator functions as a bridge to convey information from gene-specific regulatory proteins to the basal RNA polymerase II transcription machinery. Mediator is recruited to promoters by direct interactions with regulatory proteins and serves as a scaffold for the assembly of a functional preinitiation complex with RNA polymerase II and the general transcription factors. In Scheffersomyces stipitis (strain ATCC 58785 / CBS 6054 / NBRC 10063 / NRRL Y-11545) (Yeast), this protein is Mediator of RNA polymerase II transcription subunit 5 (NUT1).